Here is a 172-residue protein sequence, read N- to C-terminus: Ribosome maturation factor RimM (172 aa).

The region spanning 93 to 167 (DEHEFYYHEI…RVVITPIPGM (75 aa)) is the PRC barrel domain.

This sequence belongs to the RimM family. Binds ribosomal protein uS19.

It is found in the cytoplasm. An accessory protein needed during the final step in the assembly of 30S ribosomal subunit, possibly for assembly of the head region. Essential for efficient processing of 16S rRNA. May be needed both before and after RbfA during the maturation of 16S rRNA. It has affinity for free ribosomal 30S subunits but not for 70S ribosomes. The chain is Ribosome maturation factor RimM from Exiguobacterium sp. (strain ATCC BAA-1283 / AT1b).